Consider the following 179-residue polypeptide: Large ribosomal subunit protein uL5 (179 aa).

Belongs to the universal ribosomal protein uL5 family. In terms of assembly, part of the 50S ribosomal subunit; part of the 5S rRNA/L5/L18/L25 subcomplex. Contacts the 5S rRNA and the P site tRNA. Forms a bridge to the 30S subunit in the 70S ribosome.

This is one of the proteins that bind and probably mediate the attachment of the 5S RNA into the large ribosomal subunit, where it forms part of the central protuberance. In the 70S ribosome it contacts protein S13 of the 30S subunit (bridge B1b), connecting the 2 subunits; this bridge is implicated in subunit movement. Contacts the P site tRNA; the 5S rRNA and some of its associated proteins might help stabilize positioning of ribosome-bound tRNAs. The chain is Large ribosomal subunit protein uL5 from Desulfatibacillum aliphaticivorans.